The following is a 104-amino-acid chain: Large ribosomal subunit protein uL24 (104 aa).

Belongs to the universal ribosomal protein uL24 family. Part of the 50S ribosomal subunit.

One of two assembly initiator proteins, it binds directly to the 5'-end of the 23S rRNA, where it nucleates assembly of the 50S subunit. Its function is as follows. One of the proteins that surrounds the polypeptide exit tunnel on the outside of the subunit. The protein is Large ribosomal subunit protein uL24 of Aliivibrio fischeri (strain ATCC 700601 / ES114) (Vibrio fischeri).